Consider the following 165-residue polypeptide: Glutamyl-tRNA(Gln) amidotransferase subunit F, mitochondrial (165 aa).

The transit peptide at 1-19 directs the protein to the mitochondrion; it reads MKSILRSTTRNLITSSRRF.

It belongs to the GatF family. As to quaternary structure, subunit of the heterotrimeric GatFAB amidotransferase (AdT) complex, composed of A, B and F subunits.

It is found in the mitochondrion inner membrane. The catalysed reaction is L-glutamyl-tRNA(Gln) + L-glutamine + ATP + H2O = L-glutaminyl-tRNA(Gln) + L-glutamate + ADP + phosphate + H(+). In terms of biological role, allows the formation of correctly charged Gln-tRNA(Gln) through the transamidation of misacylated Glu-tRNA(Gln) in the mitochondria. The reaction takes place in the presence of glutamine and ATP through an activated gamma-phospho-Glu-tRNA(Gln). Required for proper protein synthesis within the mitochondrion. The chain is Glutamyl-tRNA(Gln) amidotransferase subunit F, mitochondrial from Candida albicans (strain WO-1) (Yeast).